Reading from the N-terminus, the 40-residue chain is Cytochrome b6-f complex subunit 5 (40 aa).

Residues 5-25 (ILLGMVLGFVPVTIAGLLVAA) traverse the membrane as a helical segment.

Belongs to the PetG family. The 4 large subunits of the cytochrome b6-f complex are cytochrome b6, subunit IV (17 kDa polypeptide, PetD), cytochrome f and the Rieske protein, while the 4 small subunits are PetG, PetL, PetM and PetN. The complex functions as a dimer.

It localises to the cell inner membrane. Component of the cytochrome b6-f complex, which mediates electron transfer between photosystem II (PSII) and photosystem I (PSI), cyclic electron flow around PSI, and state transitions. PetG is required for either the stability or assembly of the cytochrome b6-f complex. The sequence is that of Cytochrome b6-f complex subunit 5 from Gloeobacter violaceus (strain ATCC 29082 / PCC 7421).